We begin with the raw amino-acid sequence, 108 residues long: Nucleoid-associated protein BQ02190 (108 aa).

It belongs to the YbaB/EbfC family. In terms of assembly, homodimer.

It is found in the cytoplasm. The protein localises to the nucleoid. In terms of biological role, binds to DNA and alters its conformation. May be involved in regulation of gene expression, nucleoid organization and DNA protection. This Bartonella quintana (strain Toulouse) (Rochalimaea quintana) protein is Nucleoid-associated protein BQ02190.